The chain runs to 1009 residues: UvrABC system protein A (1009 aa).

Residue 32–39 (GLSGSGKS) participates in ATP binding. ABC transporter domains follow at residues 314–592 (WSHG…AESQ) and 612–941 (RDPS…KFLR). An ATP-binding site is contributed by 645 to 652 (GVSGSGKS). The C4-type zinc-finger motif lies at 744 to 770 (CENCSGDGTIKIEMNFLPDVYVPCEVC). Residues 956–1009 (KAPRKTAARKTAAAKSTTKKTATVRTTNNTATKKAAAVTKKTAPAKKTTRARKA) are disordered. A compositionally biased stretch (low complexity) spans 964-997 (RKTAAAKSTTKKTATVRTTNNTATKKAAAVTKKT). Residues 998–1009 (APAKKTTRARKA) show a composition bias toward basic residues.

The protein belongs to the ABC transporter superfamily. UvrA family. In terms of assembly, forms a heterotetramer with UvrB during the search for lesions.

Its subcellular location is the cytoplasm. Functionally, the UvrABC repair system catalyzes the recognition and processing of DNA lesions. UvrA is an ATPase and a DNA-binding protein. A damage recognition complex composed of 2 UvrA and 2 UvrB subunits scans DNA for abnormalities. When the presence of a lesion has been verified by UvrB, the UvrA molecules dissociate. In Streptomyces avermitilis (strain ATCC 31267 / DSM 46492 / JCM 5070 / NBRC 14893 / NCIMB 12804 / NRRL 8165 / MA-4680), this protein is UvrABC system protein A.